The chain runs to 209 residues: uncharacterized protein (209 aa).

An FCP1 homology domain is found at 1 to 199 (MQVFLDLDET…DELKRVTASL (199 aa)).

This is an uncharacterized protein from Dryophytes versicolor (chameleon treefrog).